A 65-amino-acid chain; its full sequence is Large ribosomal subunit protein bL35 (65 aa).

This sequence belongs to the bacterial ribosomal protein bL35 family.

The chain is Large ribosomal subunit protein bL35 from Thermotoga neapolitana (strain ATCC 49049 / DSM 4359 / NBRC 107923 / NS-E).